The following is a 307-amino-acid chain: Lipoyl synthase (307 aa).

7 residues coordinate [4Fe-4S] cluster: C55, C60, C66, C81, C85, C88, and S292. The 215-residue stretch at 67–281 (WEDREATFLI…ARHAEELGFS (215 aa)) folds into the Radical SAM core domain.

It belongs to the radical SAM superfamily. Lipoyl synthase family. [4Fe-4S] cluster is required as a cofactor.

The protein localises to the cytoplasm. It carries out the reaction [[Fe-S] cluster scaffold protein carrying a second [4Fe-4S](2+) cluster] + N(6)-octanoyl-L-lysyl-[protein] + 2 oxidized [2Fe-2S]-[ferredoxin] + 2 S-adenosyl-L-methionine + 4 H(+) = [[Fe-S] cluster scaffold protein] + N(6)-[(R)-dihydrolipoyl]-L-lysyl-[protein] + 4 Fe(3+) + 2 hydrogen sulfide + 2 5'-deoxyadenosine + 2 L-methionine + 2 reduced [2Fe-2S]-[ferredoxin]. It functions in the pathway protein modification; protein lipoylation via endogenous pathway; protein N(6)-(lipoyl)lysine from octanoyl-[acyl-carrier-protein]: step 2/2. In terms of biological role, catalyzes the radical-mediated insertion of two sulfur atoms into the C-6 and C-8 positions of the octanoyl moiety bound to the lipoyl domains of lipoate-dependent enzymes, thereby converting the octanoylated domains into lipoylated derivatives. The chain is Lipoyl synthase from Mycolicibacterium paratuberculosis (strain ATCC BAA-968 / K-10) (Mycobacterium paratuberculosis).